We begin with the raw amino-acid sequence, 110 residues long: Large ribosomal subunit protein P1 (110 aa).

Positions 87-110 are disordered; it reads PAAEEKKEEEKEESDEDMGFGLFD.

It belongs to the eukaryotic ribosomal protein P1/P2 family. In terms of assembly, P1 and P2 exist as dimers at the large ribosomal subunit. Post-translationally, phosphorylated.

Its function is as follows. Plays an important role in the elongation step of protein synthesis. The chain is Large ribosomal subunit protein P1 (ALTA12) from Alternaria alternata (Alternaria rot fungus).